Here is a 140-residue protein sequence, read N- to C-terminus: Mialostatin (140 aa).

An N-terminal signal peptide occupies residues 1-18 (MAFFKSAVFLVCVVLAAA). 2 cysteine pairs are disulfide-bonded: Cys-90–Cys-103 and Cys-114–Cys-134.

The protein belongs to the cystatin family. Expressed in midgut (at protein level).

Its subcellular location is the secreted. In terms of biological role, inhibitor of cysteine proteinases. Inhibits several endogenous midgut digestive cysteine proteases, such as cathepsin L1, L3, B and C, but not aspartic protease cathepsin D1 and cysteine protease legumain. Inhibits proteolysis of blood proteins catalyzed by tick gut cysteine cathepsins. Inhibits host cathepsin B (CSTB), C (CTSC), H (CTSH), K (CTSK), L (CTSL) and S (CTSS). This is Mialostatin from Ixodes ricinus (Common tick).